The sequence spans 573 residues: Delta 8-(E)-sphingolipid desaturase (573 aa).

Residues 2-77 enclose the Cytochrome b5 heme-binding domain; sequence SRVLSRRDIA…FKIWKIGRID (76 aa). 2 residues coordinate heme: His-37 and His-60. Residues 228–248 traverse the membrane as a helical segment; the sequence is LFGISFYLLSLKWFAISAICL. A Histidine box-1 motif is present at residues 260 to 264; sequence HDAGH. A helical membrane pass occupies residues 273-293; sequence VDNIIGMTVASWIGGLSLGWW. The Histidine box-2 motif lies at 297–301; that stretch reads HNVHH. The next 3 membrane-spanning stretches (helical) occupy residues 353 to 372, 393 to 413, and 422 to 442; these read YLYYPILCFGRFNLYRLSWM, LAGLSFFNYWFFYLIIYKQMP, and VMISHIATMIVHVQITLSHFA. Positions 481–485 match the Histidine box-3 motif; that stretch reads QVIHH.

The protein belongs to the fatty acid desaturase type 1 family.

It localises to the membrane. It carries out the reaction an N-acylsphing-4-enine + 2 Fe(II)-[cytochrome b5] + O2 + 2 H(+) = a (4E,8E)-4-sphinga-4,8-dienine ceramide + 2 Fe(III)-[cytochrome b5] + 2 H2O. It functions in the pathway lipid metabolism; sphingolipid metabolism. Functionally, delta(8)-fatty-acid desaturase which introduces a double bond at the 8-position in the long-chain base (LCB) of ceramides. Required for the formation of the di-unsaturated sphingoid base (E,E)-sphinga-4,8-dienine during glucosylceramide (GluCer) biosynthesis. This Kluyveromyces lactis (strain ATCC 8585 / CBS 2359 / DSM 70799 / NBRC 1267 / NRRL Y-1140 / WM37) (Yeast) protein is Delta 8-(E)-sphingolipid desaturase.